Here is a 488-residue protein sequence, read N- to C-terminus: Glutamyl-tRNA(Gln) amidotransferase subunit A, mitochondrial (488 aa).

Active-site charge relay system residues include lysine 62 and serine 140. Catalysis depends on serine 164, which acts as the Acyl-ester intermediate. Positions 205 to 228 (GHDDNDPTSITPQTRERIQDRLSR) are disordered. Residues 218 to 227 (TRERIQDRLS) show a composition bias toward basic and acidic residues.

This sequence belongs to the amidase family. GatA subfamily. As to quaternary structure, subunit of the heterotrimeric GatCAB amidotransferase (AdT) complex, composed of A, B and C subunits.

It is found in the mitochondrion. It catalyses the reaction L-glutamyl-tRNA(Gln) + L-glutamine + ATP + H2O = L-glutaminyl-tRNA(Gln) + L-glutamate + ADP + phosphate + H(+). Functionally, allows the formation of correctly charged Gln-tRNA(Gln) through the transamidation of misacylated Glu-tRNA(Gln) in the mitochondria. The reaction takes place in the presence of glutamine and ATP through an activated gamma-phospho-Glu-tRNA(Gln). The protein is Glutamyl-tRNA(Gln) amidotransferase subunit A, mitochondrial of Tuber melanosporum (strain Mel28) (Perigord black truffle).